The primary structure comprises 463 residues: Chromosomal replication initiator protein DnaA (463 aa).

The segment at 1–84 is domain I, interacts with DnaA modulators; the sequence is MNTNQIILTN…QLFQHYNNAI (84 aa). Positions 84–124 are domain II; that stretch reads IKTVEIITKELPASNQATLELPTKTFADIGSSELNSENIFS. The tract at residues 125-343 is domain III, AAA+ region; it reads TFDIRFTFDN…GALNKVIAHS (219 aa). Positions 171, 173, 174, and 175 each coordinate ATP. Positions 344-463 are domain IV, binds dsDNA; the sequence is NFTAKEITLE…INLMMKILQN (120 aa).

It belongs to the DnaA family. As to quaternary structure, oligomerizes as a right-handed, spiral filament on DNA at oriC.

The protein resides in the cytoplasm. Its function is as follows. Plays an essential role in the initiation and regulation of chromosomal replication. ATP-DnaA binds to the origin of replication (oriC) to initiate formation of the DNA replication initiation complex once per cell cycle. Binds the DnaA box (a 9 base pair repeat at the origin) and separates the double-stranded (ds)DNA. Forms a right-handed helical filament on oriC DNA; dsDNA binds to the exterior of the filament while single-stranded (ss)DNA is stabiized in the filament's interior. The ATP-DnaA-oriC complex binds and stabilizes one strand of the AT-rich DNA unwinding element (DUE), permitting loading of DNA polymerase. After initiation quickly degrades to an ADP-DnaA complex that is not apt for DNA replication. Binds acidic phospholipids. This chain is Chromosomal replication initiator protein DnaA, found in Rickettsia bellii (strain OSU 85-389).